Consider the following 545-residue polypeptide: Chaperonin GroEL 1 (545 aa).

Residues 30–33 (TLGP), Lys51, 87–91 (DGTTT), Gly415, and Asp495 each bind ATP.

This sequence belongs to the chaperonin (HSP60) family. Forms a cylinder of 14 subunits composed of two heptameric rings stacked back-to-back. Interacts with the co-chaperonin GroES.

Its subcellular location is the cytoplasm. The catalysed reaction is ATP + H2O + a folded polypeptide = ADP + phosphate + an unfolded polypeptide.. Its function is as follows. Together with its co-chaperonin GroES, plays an essential role in assisting protein folding. The GroEL-GroES system forms a nano-cage that allows encapsulation of the non-native substrate proteins and provides a physical environment optimized to promote and accelerate protein folding. This is Chaperonin GroEL 1 from Rhizobium meliloti (strain 1021) (Ensifer meliloti).